A 345-amino-acid chain; its full sequence is Arginine-hydroxylase NDUFAF5, mitochondrial (345 aa).

The N-terminal 36 residues, 1-36 (MLRPAGLWRLCRRPWAARVPAENLGRREVTSGVSPR), are a transit peptide targeting the mitochondrion.

It belongs to the methyltransferase superfamily. In terms of assembly, interacts with NDUFAF8, leading to stabilize NDUFAF5. Interacts with NDUFS7. Interacts with PYURF (via TRM112 domain); the interaction is direct and stabilizes NDUFAF5 protein.

It is found in the mitochondrion inner membrane. Functionally, arginine hydroxylase that mediates hydroxylation of 'Arg-111' of NDUFS7 and is involved in the assembly of mitochondrial NADH:ubiquinone oxidoreductase complex (complex I, MT-ND1) at early stages. May also have methyltransferase activity. This chain is Arginine-hydroxylase NDUFAF5, mitochondrial, found in Homo sapiens (Human).